The chain runs to 271 residues: Urease accessory protein UreD (271 aa).

Belongs to the UreD family. In terms of assembly, ureD, UreF and UreG form a complex that acts as a GTP-hydrolysis-dependent molecular chaperone, activating the urease apoprotein by helping to assemble the nickel containing metallocenter of UreC. The UreE protein probably delivers the nickel.

It localises to the cytoplasm. Functionally, required for maturation of urease via the functional incorporation of the urease nickel metallocenter. The polypeptide is Urease accessory protein UreD (Haemophilus influenzae (strain PittEE)).